A 130-amino-acid chain; its full sequence is Small ribosomal subunit protein bS6 (130 aa).

Residues 96–130 form a disordered region; sequence VTEASPMAKARDERDSRRSPSDDRIEEESAEENAE. The span at 104–118 shows a compositional bias: basic and acidic residues; the sequence is KARDERDSRRSPSDD. Residues 119–130 show a composition bias toward acidic residues; it reads RIEEESAEENAE.

The protein belongs to the bacterial ribosomal protein bS6 family.

Binds together with bS18 to 16S ribosomal RNA. In Shewanella denitrificans (strain OS217 / ATCC BAA-1090 / DSM 15013), this protein is Small ribosomal subunit protein bS6.